Here is a 255-residue protein sequence, read N- to C-terminus: 5'-nucleotidase SurE (255 aa).

A divalent metal cation contacts are provided by Asp8, Asp9, Ser39, and Asn91.

It belongs to the SurE nucleotidase family. It depends on a divalent metal cation as a cofactor.

Its subcellular location is the cytoplasm. The catalysed reaction is a ribonucleoside 5'-phosphate + H2O = a ribonucleoside + phosphate. Functionally, nucleotidase that shows phosphatase activity on nucleoside 5'-monophosphates. The protein is 5'-nucleotidase SurE of Acinetobacter baylyi (strain ATCC 33305 / BD413 / ADP1).